Reading from the N-terminus, the 958-residue chain is MVLMMDIKIMSAFSILFLSLMVSNEFLEFLANTVYAAILFIIILFFYQNRQHFFTTSSSSKDSLTSTTTTTTTTSITSSLIQQQQEKEQQQQLEQQQQQQSIKLITKEITIENDSEKNTSTTTSIITKEQSPGSVRLIQNYSASQQSELTNTTIKQLQQKNQELQEQINNQIEKSRKDQLKYFNSNNKSQSEIKEQIEKIIKLTEKNDDLLNSIVILNSTIDGNRIKMQEITKDRDSIYSSEQKLLSRLTAFEKKEKEYQDNEKQLQKKLSDQKDQYSTLKKEFDEKVKKSNKLENSIQSLESQIQKLLQKQEKEKQKLEKDKERERSSSFSSDISSSSTTSTTASTFLSSSPSKSIPIPIPIKTSNAISDLKRNNSNDSVNGLIGNGNSSVSPPSSSYLRESSDDSDNQSSSSPSEPKFKSLFNKVKSESSKIVNKAQKGINKHLGSDFFTPANTTTSTTTTTSTTSTSTTTPITSASATAAAISSSSIITSPTTNTTNDILSSSSSSSSSSSSLLTTNAILSPPVGNEQQMEVINDKTEVNQSPVKPLIFFDDLGNDKLLDSTTEEQIQSKMTISPRDKDRILIDKEQSLSDLFINSKENISNISVSNLDNFLKTNNNNNKNNIEESNNNNNNNNNNNNNNNNNNNNNNNNNKNDNKEVNSKLEFSIKDEENKIGLRRAKKKLSPGCSTMMEDVSIAIYPFLKEKKLSNCSNIGLFGVFDGHAGRGAADSASKLFPKEIEKLLESGNYSLTEQDDGGDNNHNQSKLLNDLFSNVDNKMKDHEYEGCTATLALIWSDGEEQQQQQQRYLQVGNVGDSSAFLCRGNESIELTFDHKANDPSEKQRIKDQGIPVSDNQTRINGVAVSRSLGNHFIKEQNIGMISTPHISNRYLLTPQDKFVIIASDGLWDVINGKDAIEKVSSLYDQGATADSMASCLLETAIQSSLCKDNVTVIIVKL.

A run of 2 helical transmembrane segments spans residues 2 to 22 and 26 to 46; these read VLMMDIKIMSAFSILFLSLMV and FLEFLANTVYAAILFIIILFF. Residues 142-330 are a coiled coil; that stretch reads SASQQSELTN…KDKERERSSS (189 aa). Basic and acidic residues predominate over residues 312–328; sequence QEKEKQKLEKDKERERS. Disordered regions lie at residues 312–361, 380–421, 445–475, 491–525, and 619–659; these read QEKE…PIPI, SVNG…PKFK, HLGSDFFTPANTTTSTTTTTSTTSTSTTTPI, ITSPTTNTTNDILSSSSSSSSSSSSLLTTNAILSP, and NNNN…NDNK. Low complexity-rich tracts occupy residues 329-361, 390-401, 452-475, 491-515, and 619-655; these read SSFSSDISSSSTTSTTASTFLSSSPSKSIPIPI, SSVSPPSSSYLR, TPANTTTSTTTTTSTTSTSTTTPI, ITSPTTNTTNDILSSSSSSSSSSSS, and NNNNKNNIEESNNNNNNNNNNNNNNNNNNNNNNNNNK. Residues 613–666 adopt a coiled-coil conformation; sequence NFLKTNNNNNKNNIEESNNNNNNNNNNNNNNNNNNNNNNNNNKNDNKEVNSKLE. Residues 675–958 form the PPM-type phosphatase domain; the sequence is KIGLRRAKKK…DNVTVIIVKL (284 aa). 4 residues coordinate Mn(2+): aspartate 722, glycine 723, aspartate 905, and aspartate 949.

This sequence in the C-terminal section; belongs to the PP2C family. Mg(2+) is required as a cofactor. Mn(2+) serves as cofactor.

It is found in the membrane. The catalysed reaction is O-phospho-L-seryl-[protein] + H2O = L-seryl-[protein] + phosphate. The enzyme catalyses O-phospho-L-threonyl-[protein] + H2O = L-threonyl-[protein] + phosphate. This is Probable protein phosphatase DDB_G0282105 from Dictyostelium discoideum (Social amoeba).